A 224-amino-acid chain; its full sequence is Ribonuclease 3 (224 aa).

The region spanning 4–127 (IEKLEQSLTY…IIGAIHLEAG (124 aa)) is the RNase III domain. A Mg(2+)-binding site is contributed by E40. D44 is a catalytic residue. Mg(2+) contacts are provided by D113 and E116. E116 is an active-site residue. Positions 154–223 (DYKTKLQEIT…AKIALEKLGA (70 aa)) constitute a DRBM domain.

This sequence belongs to the ribonuclease III family. Homodimer. Requires Mg(2+) as cofactor.

Its subcellular location is the cytoplasm. The enzyme catalyses Endonucleolytic cleavage to 5'-phosphomonoester.. Digests double-stranded RNA. Involved in the processing of primary rRNA transcript to yield the immediate precursors to the large and small rRNAs (23S and 16S). Also processes some mRNAs, and tRNAs when they are encoded in the rRNA operon. Functionally, CRISPR (clustered regularly interspaced short palindromic repeat) is an adaptive immune system that provides protection against mobile genetic elements (viruses, transposable elements and conjugative plasmids). CRISPR clusters contain spacers, sequences complementary to antecedent mobile elements, and target invading nucleic acids. CRISPR clusters are transcribed and processed into CRISPR RNA (crRNA). In this organism endogenous ribonuclease 3 and Cas9 are required for correct coprocessing of pre-crRNA and the trans-encoded small RNA (tracrRNA). Cas9, crRNA and tracrRNA are required for cleavage of invading DNA. Complements pre-crRNA and tracrRNA coprocessing defects in an rnc deletion in S.pyogenes strain 370. The chain is Ribonuclease 3 from Campylobacter jejuni subsp. jejuni serotype O:2 (strain ATCC 700819 / NCTC 11168).